Consider the following 2772-residue polypeptide: Protein DDB_G0276689 (2772 aa).

Disordered regions lie at residues glutamine 50–asparagine 82, asparagine 371–serine 415, leucine 475–leucine 514, asparagine 612–glutamate 650, leucine 685–leucine 708, and leucine 933–asparagine 982. Low complexity-rich tracts occupy residues asparagine 376–asparagine 412, asparagine 478–leucine 514, asparagine 614–asparagine 649, and serine 688–leucine 708. The stretch at leucine 1065 to proline 1089 is one LRR 1 repeat. The tract at residues asparagine 1282–asparagine 1319 is disordered. 2 LRR repeats span residues leucine 1393 to asparagine 1416 and histidine 1543 to asparagine 1567. The segment covering glutamine 1587 to asparagine 1619 has biased composition (low complexity). The segment at glutamine 1587–asparagine 1622 is disordered. Residues leucine 1899–glutamate 1922 form an LRR 4 repeat. 2 stretches are compositionally biased toward polar residues: residues tyrosine 1999–isoleucine 2011 and leucine 2073–serine 2083. Disordered stretches follow at residues tyrosine 1999 to lysine 2021, glutamate 2054 to serine 2083, and asparagine 2367 to asparagine 2386. Residues threonine 2414–asparagine 2439 form an LRR 5 repeat.

This chain is Protein DDB_G0276689, found in Dictyostelium discoideum (Social amoeba).